The following is a 189-amino-acid chain: Chitin synthase 2 (189 aa).

This sequence belongs to the chitin synthase family. Class II subfamily.

The protein localises to the cell membrane. The catalysed reaction is [(1-&gt;4)-N-acetyl-beta-D-glucosaminyl](n) + UDP-N-acetyl-alpha-D-glucosamine = [(1-&gt;4)-N-acetyl-beta-D-glucosaminyl](n+1) + UDP + H(+). Its function is as follows. Polymerizes chitin, a structural polymer of the cell wall and septum, by transferring the sugar moiety of UDP-GlcNAc to the non-reducing end of the growing chitin polymer. This is Chitin synthase 2 (CHS2) from Exophiala exophialae (Black yeast-like fungus).